The chain runs to 284 residues: Putative ABC transporter ATP-binding protein sll0385 (284 aa).

An ABC transporter domain is found at 51-278 (IRVRELSFAY…QTLMESHGLE (228 aa)). 84–91 (GHNGCGKT) provides a ligand contact to ATP.

It belongs to the ABC transporter superfamily.

The protein resides in the cell inner membrane. In terms of biological role, probably part of an ABC transporter complex. Responsible for energy coupling to the transport system. The polypeptide is Putative ABC transporter ATP-binding protein sll0385 (Synechocystis sp. (strain ATCC 27184 / PCC 6803 / Kazusa)).